The following is a 309-amino-acid chain: Ornithine carbamoyltransferase (309 aa).

Carbamoyl phosphate is bound by residues 57 to 60 (STRT), Gln-84, Arg-108, and 135 to 138 (HPCQ). L-ornithine contacts are provided by residues Asn-166, Asp-224, and 228 to 229 (SM). Residues 264–265 (CL) and Arg-292 each bind carbamoyl phosphate.

It belongs to the aspartate/ornithine carbamoyltransferase superfamily. OTCase family.

It localises to the cytoplasm. The enzyme catalyses carbamoyl phosphate + L-ornithine = L-citrulline + phosphate + H(+). The protein operates within amino-acid biosynthesis; L-arginine biosynthesis; L-arginine from L-ornithine and carbamoyl phosphate: step 1/3. Reversibly catalyzes the transfer of the carbamoyl group from carbamoyl phosphate (CP) to the N(epsilon) atom of ornithine (ORN) to produce L-citrulline. This Paracidovorax citrulli (strain AAC00-1) (Acidovorax citrulli) protein is Ornithine carbamoyltransferase.